A 78-amino-acid chain; its full sequence is Putative snRNP Sm-like protein (78 aa).

The Sm domain occupies 4–76; it reads RPLDVIHRSL…VLAISPVDVG (73 aa).

It belongs to the snRNP Sm proteins family.

The sequence is that of Putative snRNP Sm-like protein from Thermococcus onnurineus (strain NA1).